The primary structure comprises 60 residues: Protein translocase subunit SecE (60 aa).

The Cytoplasmic portion of the chain corresponds to 1–31 (MFARLIRYFQEARAELARVTWPTREQVVEGT). The chain crosses the membrane as a helical span at residues 32–52 (QAILLFTLAFMVILGLYDTVF). At 53–60 (RFLIGLLR) the chain is on the extracellular side.

This sequence belongs to the SecE/SEC61-gamma family. In terms of assembly, component of the Sec protein translocase complex. Heterotrimer consisting of SecY, SecE and SecG subunits. The heterotrimers can form oligomers, although 1 heterotrimer is thought to be able to translocate proteins. Interacts with SecDF, and other proteins may be involved. The channel interacts with SecA via subunit SecY.

The protein localises to the cell inner membrane. In terms of biological role, essential subunit of the protein translocation channel SecYEG. Clamps together the 2 halves of SecY. May contact the channel plug during translocation. This chain is Protein translocase subunit SecE, found in Thermus thermophilus (strain ATCC 27634 / DSM 579 / HB8).